The primary structure comprises 823 residues: Protein FAM193B (823 aa).

Disordered stretches follow at residues 1–78, 158–191, 209–281, and 381–409; these read MTRR…TSQS, SCKSQSCGGDSHSSSSSSSSSSSSSSSCHGNSGD, SPHS…PTTP, and CEADEGLGEEEDSSSERSSCTSSSTHQRD. Residues 26 to 36 show a composition bias toward pro residues; the sequence is PQAPEPPPPPS. Basic and acidic residues predominate over residues 52–64; sequence PYRDDPREEDEPK. 2 stretches are compositionally biased toward low complexity: residues 168 to 184 and 263 to 281; these read SHSSSSSSSSSSSSSSS and SHPGSFGSPPHPHLLPTTP. The span at 382 to 393 shows a compositional bias: acidic residues; the sequence is EADEGLGEEEDS. The stretch at 422–484 forms a coiled coil; sequence GHNAEKEKAQ…RLQEIKNTVK (63 aa). Disordered stretches follow at residues 503 to 583 and 599 to 775; these read FSKE…PENG and WVKT…PKDM. 2 stretches are compositionally biased toward polar residues: residues 516–526 and 641–657; these read LAPSNPSGSSE and QGNQAKKSEVSPASQSP. A phosphoserine mark is found at Ser-694, Ser-706, and Ser-813.

The protein belongs to the FAM193 family.

It localises to the cytoplasm. It is found in the nucleus. This Bos taurus (Bovine) protein is Protein FAM193B (FAM193B).